The primary structure comprises 314 residues: L-lactate dehydrogenase (314 aa).

Residues valine 17, aspartate 38, lysine 43, tyrosine 69, and 83-84 (GA) each bind NAD(+). Substrate-binding residues include glutamine 86 and arginine 92. NAD(+) contacts are provided by residues serine 105, 122-124 (ASN), and serine 147. A substrate-binding site is contributed by 124–127 (NPVD). Residue 152-155 (DSAR) coordinates substrate. The beta-D-fructose 1,6-bisphosphate site is built by arginine 157 and histidine 172. Histidine 179 acts as the Proton acceptor in catalysis. A Phosphotyrosine modification is found at tyrosine 223. Threonine 232 provides a ligand contact to substrate.

Belongs to the LDH/MDH superfamily. LDH family. In terms of assembly, homotetramer.

Its subcellular location is the cytoplasm. It catalyses the reaction (S)-lactate + NAD(+) = pyruvate + NADH + H(+). The protein operates within fermentation; pyruvate fermentation to lactate; (S)-lactate from pyruvate: step 1/1. With respect to regulation, allosterically activated by fructose 1,6-bisphosphate (FBP). Catalyzes the conversion of lactate to pyruvate. The protein is L-lactate dehydrogenase of Corynebacterium glutamicum (strain ATCC 13032 / DSM 20300 / JCM 1318 / BCRC 11384 / CCUG 27702 / LMG 3730 / NBRC 12168 / NCIMB 10025 / NRRL B-2784 / 534).